The chain runs to 566 residues: Liver carboxylesterase (566 aa).

Positions 1 to 18 are cleaved as a signal peptide; the sequence is MWLLPLVLTSLASSATWA. A glycan (N-linked (GlcNAc...) asparagine) is linked at Asn80. An intrachain disulfide couples Cys88 to Cys117. Ser222 functions as the Acyl-ester intermediate in the catalytic mechanism. The cysteines at positions 274 and 285 are disulfide-linked. Catalysis depends on Glu354, which acts as the Charge relay system. Ser379 is modified (phosphoserine). His467 (charge relay system) is an active-site residue. A Prevents secretion from ER motif is present at residues 563–566; that stretch reads HAEL.

It belongs to the type-B carboxylesterase/lipase family.

Its subcellular location is the endoplasmic reticulum lumen. It catalyses the reaction a carboxylic ester + H2O = an alcohol + a carboxylate + H(+). With respect to regulation, activated by CHAPS at concentrations of up to 130 mM, higher concentrations reduce activity. In the presence of CHAPS, activity is stimulated by non-ionic detergents. Inhibited by the esterase inhibitors diisopropylfluorophosphate and phenylmethylsulfonyl fluoride. In terms of biological role, involved in the detoxification of xenobiotics and in the activation of ester and amide prodrugs. Active towards triacylglycerides containing short-chain fatty acids from C2 to C6, and 1(3)-monoacylglycerols containing fatty acids from C2 to C12. Inactive on long-chain triacylglycerols and diacylglycerol. Hydrolyzes aromatic and alkyl esters and vitamin A acetate. The hydrolysis rate depends upon the amino acid promoiety and the esterification site of the prodrug. Aromatic promoieties are favored, highest rates are observed with phenylalanyl progdrugs, hydrolysis of valyl and isoleucyl prodrugs is less efficient. With floxuridine prodrugs, activity is higher on 5' monoesters than on 3' monoesters. With gemcitabine prodrugs, activity is higher on 3' monoesters than on 5' monoesters. The protein is Liver carboxylesterase of Sus scrofa (Pig).